A 186-amino-acid polypeptide reads, in one-letter code: Small ribosomal subunit protein uS7 (186 aa).

It belongs to the universal ribosomal protein uS7 family. As to quaternary structure, part of the 30S ribosomal subunit.

Functionally, one of the primary rRNA binding proteins, it binds directly to 16S rRNA where it nucleates assembly of the head domain of the 30S subunit. Is located at the subunit interface close to the decoding center. The chain is Small ribosomal subunit protein uS7 from Methanococcoides burtonii (strain DSM 6242 / NBRC 107633 / OCM 468 / ACE-M).